The primary structure comprises 301 residues: Mitochondrial import receptor subunit TOM40 homolog (301 aa).

Residues 1–19 show a composition bias toward polar residues; it reads MATPTESELASPIPQTNPG. The disordered stretch occupies residues 1-20; sequence MATPTESELASPIPQTNPGS.

This sequence belongs to the Tom40 family. As to quaternary structure, forms part of the preprotein translocase complex of the outer mitochondrial membrane (TOM complex). Interacts with mitochondrial targeting sequences. Ubiquitously expressed, but highly expressed in the pharyngeal muscles, the nerve ring, the intestine, gonadal sheath and in the tail hypodermis.

The protein localises to the mitochondrion outer membrane. Its function is as follows. Channel-forming protein essential for import of protein precursors into mitochondria. Specifically required for nnt-1 accumulation in the mitochondria and may be involved in the secretion of daf-28/insulin from the mitochondria. Required for embryonic and larval development. The protein is Mitochondrial import receptor subunit TOM40 homolog of Caenorhabditis elegans.